The sequence spans 184 residues: Guanylate kinase (184 aa).

A Guanylate kinase-like domain is found at 5–183 (KKLIIITGPS…TVKEVLKIIK (179 aa)). 12-19 (GPSGVGKG) is an ATP binding site.

The protein belongs to the guanylate kinase family.

The protein localises to the cytoplasm. The catalysed reaction is GMP + ATP = GDP + ADP. Functionally, essential for recycling GMP and indirectly, cGMP. The sequence is that of Guanylate kinase from Prochlorococcus marinus subsp. pastoris (strain CCMP1986 / NIES-2087 / MED4).